Consider the following 411-residue polypeptide: UPF0761 membrane protein PLES_43641 (411 aa).

6 helical membrane passes run 36–56, 92–112, 132–152, 174–194, 207–229, and 244–264; these read LFAV…IPAF, HLTW…LVTI, FLLY…GFAV, LLGL…YSAV, GGVF…VSLF, and IFLL…VLVC.

Belongs to the UPF0761 family.

It localises to the cell inner membrane. This Pseudomonas aeruginosa (strain LESB58) protein is UPF0761 membrane protein PLES_43641.